The sequence spans 638 residues: Growth hormone receptor (638 aa).

Residues 1 to 18 (MDLWQLLLTVALAGSSDA) form the signal peptide. Topologically, residues 19 to 264 (FSGSEATPAT…SPFTCEEDFR (246 aa)) are extracellular. Positions 30–51 (GRASESVQRVHPGLGTNSSGKP) are disordered. N-linked (GlcNAc...) asparagine glycosylation occurs at Asn-46. Cystine bridges form between Cys-56-Cys-66 and Cys-101-Cys-112. N-linked (GlcNAc...) asparagine glycosylation occurs at Asn-115. A disulfide bridge links Cys-126 with Cys-140. Positions 151 to 254 (PPIGLNWTLL…EVLYVTLPQM (104 aa)) constitute a Fibronectin type-III domain. N-linked (GlcNAc...) asparagine glycans are attached at residues Asn-156, Asn-161, and Asn-200. The short motif at 240 to 244 (YGEFS) is the WSXWS motif element. Positions 260-262 (EED) are required for ADAM17-mediated proteolysis. The chain crosses the membrane as a helical span at residues 265 to 288 (FPWFLIIIFGIFGLTVMLFVFIFS). Over 289-638 (KQQRIKMLIL…STDQLNKILP (350 aa)) the chain is Cytoplasmic. The tract at residues 294-379 (KMLILPPVPV…HQKSLSVLAA (86 aa)) is required for JAK2 binding. Residues 297 to 305 (ILPPVPVPK) carry the Box 1 motif motif. The UbE motif motif lies at 340 to 349 (DSWVEFIELD). At Ser-341 the chain carries Phosphoserine. Position 487 is a phosphotyrosine (Tyr-487). The interval 573–592 (TTTAERSGTAEDAPGSEMPV) is disordered. Tyr-595 is subject to Phosphotyrosine.

The protein belongs to the type I cytokine receptor family. Type 1 subfamily. In terms of assembly, on growth hormone (GH) binding, forms homodimers and binds JAK2 via a box 1-containing domain. The soluble form (GHBP) is produced by phorbol ester-promoted proteolytic cleavage at the cell surface (shedding) by ADAM17/TACE. Shedding is inhibited by growth hormone (GH) binding to the receptor probably due to a conformational change in GHR rendering the receptor inaccessible to ADAM17. In terms of processing, on GH binding, phosphorylated on tyrosine residues in the cytoplasmic domain by JAK2. Post-translationally, ubiquitinated by the ECS(SOCS2) complex following ligand-binding and phosphorylation by JAK2, leading to its degradation by the proteasome. Regulation by the ECS(SOCS2) complex acts as a negative feedback loop of growth hormone receptor signaling. Ubiquitination is not sufficient for GHR internalization.

The protein localises to the cell membrane. Its subcellular location is the secreted. In terms of biological role, receptor for pituitary gland growth hormone involved in regulating postnatal body growth. On ligand binding, couples to, and activates the JAK2/STAT5 pathway. Its function is as follows. The soluble form acts as a reservoir of growth hormone in plasma and may be a modulator/inhibitor of GH signaling. The sequence is that of Growth hormone receptor from Oryctolagus cuniculus (Rabbit).